The primary structure comprises 454 residues: tRNA modification GTPase MnmE (454 aa).

The (6S)-5-formyl-5,6,7,8-tetrahydrofolate site is built by arginine 23, glutamate 80, and lysine 120. The TrmE-type G domain maps to 216-377; it reads GMKVVIAGRP…LRNHLKQSMG (162 aa). Asparagine 226 lines the K(+) pocket. Residues 226–231, 245–251, 270–273, 335–338, and 358–360 contribute to the GTP site; these read NAGKSS, TDIAGTT, DTAG, NKAD, and SAR. Residue serine 230 participates in Mg(2+) binding. K(+)-binding residues include threonine 245, isoleucine 247, and threonine 250. Threonine 251 provides a ligand contact to Mg(2+). Residue lysine 454 participates in (6S)-5-formyl-5,6,7,8-tetrahydrofolate binding.

The protein belongs to the TRAFAC class TrmE-Era-EngA-EngB-Septin-like GTPase superfamily. TrmE GTPase family. As to quaternary structure, homodimer. Heterotetramer of two MnmE and two MnmG subunits. K(+) is required as a cofactor.

The protein resides in the cytoplasm. Functionally, exhibits a very high intrinsic GTPase hydrolysis rate. Involved in the addition of a carboxymethylaminomethyl (cmnm) group at the wobble position (U34) of certain tRNAs, forming tRNA-cmnm(5)s(2)U34. This Salmonella gallinarum (strain 287/91 / NCTC 13346) protein is tRNA modification GTPase MnmE.